Consider the following 158-residue polypeptide: MTELKLIHIFTDGSCLGNPGPGGYGIVMNYKGHTKEMSDGFALTTNNRMELLAPIVALEALKEPCKVILTSDSQYMRQGITTWIHGWKKKGWMTSNRTPVKNVDLWKRLDKAAQLHHIDWRWVKGHAGHAENERCDQLARAAAEASPTQIDEGYQADS.

The 142-residue stretch at 3–144 (ELKLIHIFTD…CDQLARAAAE (142 aa)) folds into the RNase H type-1 domain. Residues aspartate 12, glutamate 50, aspartate 72, and aspartate 136 each contribute to the Mg(2+) site.

The protein belongs to the RNase H family. As to quaternary structure, monomer. Mg(2+) is required as a cofactor.

Its subcellular location is the cytoplasm. It carries out the reaction Endonucleolytic cleavage to 5'-phosphomonoester.. Endonuclease that specifically degrades the RNA of RNA-DNA hybrids. In Shewanella sp. (strain MR-7), this protein is Ribonuclease H.